The chain runs to 754 residues: 1,4-alpha-glucan branching enzyme GlgB (754 aa).

The active-site Nucleophile is D431. E484 acts as the Proton donor in catalysis.

This sequence belongs to the glycosyl hydrolase 13 family. GlgB subfamily. Monomer.

It carries out the reaction Transfers a segment of a (1-&gt;4)-alpha-D-glucan chain to a primary hydroxy group in a similar glucan chain.. The protein operates within glycan biosynthesis; glycogen biosynthesis. Its function is as follows. Catalyzes the formation of the alpha-1,6-glucosidic linkages in glycogen by scission of a 1,4-alpha-linked oligosaccharide from growing alpha-1,4-glucan chains and the subsequent attachment of the oligosaccharide to the alpha-1,6 position. In Prochlorococcus marinus (strain MIT 9215), this protein is 1,4-alpha-glucan branching enzyme GlgB.